The following is a 359-amino-acid chain: Aromatic amino acid aminotransferase (359 aa).

Positions 1-42 (MSERKPPYLRSALDSIPPYRPGRKVVGPDGRSAKLSSNESPF) are disordered. Lys-223 is modified (N6-(pyridoxal phosphate)lysine).

This sequence belongs to the class-II pyridoxal-phosphate-dependent aminotransferase family. Homodimer. The cofactor is pyridoxal 5'-phosphate.

It catalyses the reaction an aromatic L-alpha-amino acid + 2-oxoglutarate = an aromatic oxo-acid + L-glutamate. In terms of biological role, aminotransferase that catalyzes the conversion of aromatic amino acids and 2-oxoglutarate into corresponding aromatic oxo acids and L-glutamate. This Thermobifida fusca (strain YX) protein is Aromatic amino acid aminotransferase.